The primary structure comprises 164 residues: Transcriptional regulator MraZ (164 aa).

SpoVT-AbrB domains lie at 7–63 (REQH…EPAV) and 92–135 (LDQL…NPDR).

It belongs to the MraZ family. As to quaternary structure, forms oligomers.

Its subcellular location is the cytoplasm. The protein resides in the nucleoid. The protein is Transcriptional regulator MraZ of Chlorobaculum parvum (strain DSM 263 / NCIMB 8327) (Chlorobium vibrioforme subsp. thiosulfatophilum).